The chain runs to 149 residues: Transcriptional repressor NrdR (149 aa).

The segment at 3–34 is a zinc-finger region; it reads CPFCGHAATQVIDTRMSEEGDTVRRRRRCESC. One can recognise an ATP-cone domain in the interval 49-139; sequence PAVVKKNGSR…VYRSFEDVSE (91 aa).

This sequence belongs to the NrdR family. Requires Zn(2+) as cofactor.

Negatively regulates transcription of bacterial ribonucleotide reductase nrd genes and operons by binding to NrdR-boxes. The chain is Transcriptional repressor NrdR from Ralstonia nicotianae (strain ATCC BAA-1114 / GMI1000) (Ralstonia solanacearum).